The chain runs to 84 residues: Large ribosomal subunit protein bL27 (84 aa).

The interval 1–20 is disordered; it reads MAHKKAGGSTRNGRDSNPKY.

The protein belongs to the bacterial ribosomal protein bL27 family.

This chain is Large ribosomal subunit protein bL27, found in Francisella philomiragia subsp. philomiragia (strain ATCC 25017 / CCUG 19701 / FSC 153 / O#319-036).